We begin with the raw amino-acid sequence, 220 residues long: Redox-sensing transcriptional repressor Rex (220 aa).

The segment at residues 25-64 (WYLSNVKLLKQRGERFVSSTQISKEINIDASQIAKDLSYV) is a DNA-binding region (H-T-H motif). Residue 99–104 (GVGSLG) participates in NAD(+) binding.

Belongs to the transcriptional regulatory Rex family. As to quaternary structure, homodimer.

The protein resides in the cytoplasm. Modulates transcription in response to changes in cellular NADH/NAD(+) redox state. The polypeptide is Redox-sensing transcriptional repressor Rex (Bacteroides thetaiotaomicron (strain ATCC 29148 / DSM 2079 / JCM 5827 / CCUG 10774 / NCTC 10582 / VPI-5482 / E50)).